The chain runs to 310 residues: Haloalkane dehalogenase (310 aa).

The AB hydrolase-1 domain occupies 49–295 (VFLCLHGEPT…DAGHFVQEFG (247 aa)). Asp124 acts as the Nucleophile in catalysis. 2 residues coordinate chloride: Trp125 and Trp175. Catalysis depends on Asp260, which acts as the Proton donor. The active-site Proton acceptor is the His289.

This sequence belongs to the haloalkane dehalogenase family. Type 1 subfamily. Monomer.

The enzyme catalyses 1-haloalkane + H2O = a halide anion + a primary alcohol + H(+). The catalysed reaction is 1,2-dichloroethane + H2O = 2-chloroethanol + chloride + H(+). The protein operates within xenobiotic degradation; 1,2-dichloroethane degradation; glycolate from 1,2-dichloroethane: step 1/4. With respect to regulation, inhibited by thiol reagents such as p-chloromercuribenzoate and iodoacetamide. Catalyzes hydrolytic cleavage of carbon-halogen bonds in halogenated aliphatic compounds, leading to the formation of the corresponding primary alcohols, halide ions and protons. Has a broad substrate specificity, which includes terminally mono- and di- chlorinated and brominated alkanes (up to C4 only). The highest activity was found with 1,2-dichloroethane, 1,3-dichloropropane, and 1,2-dibromoethane. This chain is Haloalkane dehalogenase (dhlA), found in Xanthobacter autotrophicus.